Reading from the N-terminus, the 199-residue chain is MAEEQVLNTHNASILLSAANKSHYPQDDLPEIALAGRSNVGKSSFINTILGRKNLARTSSKPGKTQLLNFFNIDDKLRFVDVPGYGYAKVSKSERAEWGKMIEEYLTSRDNLRAVVSLVDLRHAPSKEDIQMYDFLKYYDIPVIVVATKADKIPRGKWNKHESVVKKALNFDKSDTFIVFSSVERIGIDDSWDAILEQV.

One can recognise an EngB-type G domain in the interval 28–199 (DLPEIALAGR…DSWDAILEQV (172 aa)). GTP-binding positions include 36-43 (GRSNVGKS), 63-67 (GKTQL), 81-84 (DVPG), 148-151 (TKAD), and 180-182 (FSS). Residues Ser43 and Thr65 each contribute to the Mg(2+) site.

The protein belongs to the TRAFAC class TrmE-Era-EngA-EngB-Septin-like GTPase superfamily. EngB GTPase family. Requires Mg(2+) as cofactor.

In terms of biological role, necessary for normal cell division and for the maintenance of normal septation. The protein is Probable GTP-binding protein EngB of Streptococcus pyogenes serotype M18 (strain MGAS8232).